A 275-amino-acid chain; its full sequence is Lysosome-associated membrane glycoprotein 5 (275 aa).

The signal sequence occupies residues 1 to 18; the sequence is MEFQLLLLCSVWALGVCA. Residues 19–228 lie on the Extracellular side of the membrane; it reads EQEVENLSGL…VTDQREQLEQ (210 aa). Asn24 and Asn42 each carry an N-linked (GlcNAc...) asparagine glycan. The helical transmembrane segment at 229–249 threads the bilayer; sequence TLPLVLGLILGLIIVITISVY. Residues 250–275 are Cytoplasmic-facing; it reads HFHLKLNAAHTQQPTLPRDRSLYKNM.

The protein belongs to the LAMP family. Glycosylated.

The protein localises to the cytoplasmic vesicle membrane. It localises to the cell membrane. Its subcellular location is the cell projection. It is found in the dendrite. The protein resides in the cytoplasmic vesicle. The protein localises to the secretory vesicle. It localises to the synaptic vesicle membrane. Its subcellular location is the growth cone membrane. It is found in the early endosome membrane. The protein resides in the recycling endosome. The protein localises to the endoplasmic reticulum-Golgi intermediate compartment membrane. It localises to the endosome membrane. Functionally, plays a role in short-term synaptic plasticity in a subset of GABAergic neurons in the brain. The protein is Lysosome-associated membrane glycoprotein 5 (lamp5) of Danio rerio (Zebrafish).